The following is a 153-amino-acid chain: Nascent polypeptide-associated complex subunit beta (153 aa).

Disordered regions lie at residues 1–40 (MSDVQERLKKLGLGARTGTGKGTPRRKVKRAPARSGADDK) and 126–153 (LQKEKGEDDDEIPDLVEGENFEGEPKVE). A compositionally biased stretch (basic residues) spans 23-32 (TPRRKVKRAP). The NAC-A/B domain occupies 36-101 (GADDKKLQLA…GEDKELTELV (66 aa)). Acidic residues predominate over residues 132-147 (EDDDEIPDLVEGENFE).

It belongs to the NAC-beta family. As to quaternary structure, part of the nascent polypeptide-associated complex (NAC), consisting of EGD2 and EGD1. NAC associates with ribosomes via EGD1.

It is found in the cytoplasm. Its subcellular location is the nucleus. Component of the nascent polypeptide-associated complex (NAC), a dynamic component of the ribosomal exit tunnel, protecting the emerging polypeptides from interaction with other cytoplasmic proteins to ensure appropriate nascent protein targeting. The NAC complex also promotes mitochondrial protein import by enhancing productive ribosome interactions with the outer mitochondrial membrane and blocks the inappropriate interaction of ribosomes translating non-secretory nascent polypeptides with translocation sites in the membrane of the endoplasmic reticulum. EGD1 may act as a transcription factor that exert a negative effect on the expression of several genes that are transcribed by RNA polymerase II. In Gibberella zeae (strain ATCC MYA-4620 / CBS 123657 / FGSC 9075 / NRRL 31084 / PH-1) (Wheat head blight fungus), this protein is Nascent polypeptide-associated complex subunit beta (EGD1).